Reading from the N-terminus, the 73-residue chain is RNA-binding protein Hfq (73 aa).

Positions 8–68 (DQFLNQIRKD…ISTFAPQKNV (61 aa)) constitute a Sm domain.

This sequence belongs to the Hfq family. Homohexamer.

RNA chaperone that binds small regulatory RNA (sRNAs) and mRNAs to facilitate mRNA translational regulation in response to envelope stress, environmental stress and changes in metabolite concentrations. Also binds with high specificity to tRNAs. The polypeptide is RNA-binding protein Hfq (Bacillus velezensis (strain DSM 23117 / BGSC 10A6 / LMG 26770 / FZB42) (Bacillus amyloliquefaciens subsp. plantarum)).